We begin with the raw amino-acid sequence, 911 residues long: MFAPLLKKLFGSKNEREVKRMLKTVSIVNAFEEKMVALSDEQLRGKTAEFKERLAKGETLDQLLPEAFAVAREAGKRVMGMRHFDVQLIGGMTLHEGMIAEMRTGEGKTLVGTLAVYLNALSGKGVHVVTVNDYLARRDANWMRPLYEFLGLSVGIVSAFQPPEEKRAAYAADITYGTNNEFGFDYLRDNMAFSQDEKFQRELNFAVIDEVDSILIDEARTPLIISGQAEDSSKLYIEINRLIPRLTQHIEEVEGQVTQEGHFTIDEKSRQVELNEAGHQFIEEMLAQAGLLAEGESLYSAHNLGLLTHVYAGLRAHKLFHRNVEYIVQDGQVLLIDEHTGRTMPGRRLSEGLHQAIEAKENLNIQAESQTLASTTFQNYFRLYTKLSGMTGTADTEAFEFQSIYGLNVMVIPPNKPLARKDYNDLVYLTADEKYAAIIADIKESMKLGRPVLVGTATIETSEHMSNLLKKEGIDHKVLNAKYHEKEAEIIAQAGAPGALTIATNMAGRGTDILLGGNWEAEVAALENPTAEQIAQIKADWQKRHQQVIETGGLHVIASERHESRRIDNQLRGRSGRQGDPGSSRFYLSLEDSLMRIFASDRVKNFMKALGMQSGEAIEHRMVTNAIEKAQRKVEGRNFDIRKQLLEYDDVANEQRKVIYHMRNSLLAAENIGDTIVEFRKEVLDATISQHIPPQSLPEQWDVAGLEASLASDFAIKLPIRQWLDEDDHLYEETLREKLLSEITTAYTEKEDQAGLEALRTFEKQILLRVLDDLWKDHLSTMDHLRHGIHLRGYAQKNPKQEYKRESFSLFQELLESIKRDTIRVLSHVQVRREDPAEEEARLRREAEELASRMQFQHAAAPGLGSEQLSEEGAEVAVASAPVRNDQKLGRNEPCWCGSGKKFKHCHGQIE.

ATP-binding positions include Q87, G105–T109, and D512. Residues A861–S880 form a disordered region. Zn(2+)-binding residues include C895, C897, C906, and H907.

The protein belongs to the SecA family. In terms of assembly, monomer and homodimer. Part of the essential Sec protein translocation apparatus which comprises SecA, SecYEG and auxiliary proteins SecDF-YajC and YidC. Requires Zn(2+) as cofactor.

The protein resides in the cell inner membrane. The protein localises to the cytoplasm. The enzyme catalyses ATP + H2O + cellular proteinSide 1 = ADP + phosphate + cellular proteinSide 2.. Functionally, part of the Sec protein translocase complex. Interacts with the SecYEG preprotein conducting channel. Has a central role in coupling the hydrolysis of ATP to the transfer of proteins into and across the cell membrane, serving both as a receptor for the preprotein-SecB complex and as an ATP-driven molecular motor driving the stepwise translocation of polypeptide chains across the membrane. The sequence is that of Protein translocase subunit SecA from Pseudomonas putida (strain ATCC 47054 / DSM 6125 / CFBP 8728 / NCIMB 11950 / KT2440).